The sequence spans 174 residues: Inactive protein RESTRICTED TEV MOVEMENT 1 (174 aa).

The region spanning 1–152 (MKIGPVGKHD…LQYIGVYLRP (152 aa)) is the Jacalin-type lectin domain.

It belongs to the jacalin lectin family. As to quaternary structure, self-interacts. Interacts with RTM3.

It localises to the cytoplasm. Unable to mediate restriction of long-distance movement of the pathogenic tobacco etch virus (TEV) without causing a hypersensitive response or inducing systemic acquired resistance. The sequence is that of Inactive protein RESTRICTED TEV MOVEMENT 1 (RTM1) from Arabidopsis thaliana (Mouse-ear cress).